The sequence spans 49 residues: Sperm protamine P1 (49 aa).

The protein belongs to the protamine P1 family. Testis.

The protein localises to the nucleus. It localises to the chromosome. Its function is as follows. Protamines substitute for histones in the chromatin of sperm during the haploid phase of spermatogenesis. They compact sperm DNA into a highly condensed, stable and inactive complex. This chain is Sperm protamine P1 (PRM1), found in Pteropus hypomelanus (Island flying fox).